A 773-amino-acid chain; its full sequence is DEAD-box ATP-dependent RNA helicase 32 (773 aa).

Residues 28–71 form a disordered region; sequence IDAGKPARGTRPPPLSKSSSSPADTAAAKRGAKGAGGVPSKAAG. Positions 43-56 are enriched in low complexity; the sequence is SKSSSSPADTAAAK. Residues 80–108 carry the Q motif motif; the sequence is ARFDELPLSNKTKDGLRKAGYTEMSEIQR. Positions 111 to 287 constitute a Helicase ATP-binding domain; sequence LPHALCGRDV…RVSLKDPEYI (177 aa). An ATP-binding site is contributed by 124–131; it reads AKTGSGKT. Positions 235 to 238 match the DEAD box motif; it reads DEAD. In terms of domain architecture, Helicase C-terminal spans 309–462; sequence PLEQKLNMLW…IKKPNTEQLQ (154 aa). Positions 664–715 form a coiled coil; it reads DKDKISQRYAEMLREMQEHDKEDKLEHKRILREKKLQKKLKLKRKRNEEMDA. Positions 699-708 are enriched in basic residues; sequence LQKKLKLKRK. The segment at 699-755 is disordered; sequence LQKKLKLKRKRNEEMDAGSENSGSESDRDQRTASKGKKRYFNSDDEEGSKDAAKDGD.

It belongs to the DEAD box helicase family. DDX10/DBP4 subfamily.

The enzyme catalyses ATP + H2O = ADP + phosphate + H(+). The sequence is that of DEAD-box ATP-dependent RNA helicase 32 from Oryza sativa subsp. japonica (Rice).